Here is a 355-residue protein sequence, read N- to C-terminus: UDP-N-acetylglucosamine--N-acetylmuramyl-(pentapeptide) pyrophosphoryl-undecaprenol N-acetylglucosamine transferase (355 aa).

Residues 15–17 (TGG), asparagine 127, arginine 163, serine 191, isoleucine 244, 263–268 (ALTVSE), and glutamine 288 each bind UDP-N-acetyl-alpha-D-glucosamine.

This sequence belongs to the glycosyltransferase 28 family. MurG subfamily.

The protein resides in the cell inner membrane. It catalyses the reaction di-trans,octa-cis-undecaprenyl diphospho-N-acetyl-alpha-D-muramoyl-L-alanyl-D-glutamyl-meso-2,6-diaminopimeloyl-D-alanyl-D-alanine + UDP-N-acetyl-alpha-D-glucosamine = di-trans,octa-cis-undecaprenyl diphospho-[N-acetyl-alpha-D-glucosaminyl-(1-&gt;4)]-N-acetyl-alpha-D-muramoyl-L-alanyl-D-glutamyl-meso-2,6-diaminopimeloyl-D-alanyl-D-alanine + UDP + H(+). Its pathway is cell wall biogenesis; peptidoglycan biosynthesis. Cell wall formation. Catalyzes the transfer of a GlcNAc subunit on undecaprenyl-pyrophosphoryl-MurNAc-pentapeptide (lipid intermediate I) to form undecaprenyl-pyrophosphoryl-MurNAc-(pentapeptide)GlcNAc (lipid intermediate II). This chain is UDP-N-acetylglucosamine--N-acetylmuramyl-(pentapeptide) pyrophosphoryl-undecaprenol N-acetylglucosamine transferase, found in Escherichia coli (strain K12 / MC4100 / BW2952).